The sequence spans 78 residues: Delta-conotoxin TxVIA (78 aa).

The N-terminal stretch at 1-22 (MKLTCMMIVAVLFLTAWTFATA) is a signal peptide. Residues 23 to 49 (DDSGNGLENLFSNAHHQMKNPEASKLN) constitute a propeptide that is removed on maturation. 3 cysteine pairs are disulfide-bonded: cysteine 53–cysteine 68, cysteine 60–cysteine 72, and cysteine 67–cysteine 77. Methionine 59 is modified (methionine sulfoxide; partial).

It belongs to the conotoxin O1 superfamily. In terms of tissue distribution, expressed by the venom duct. Is present in all duct parts with a highest content in part 4 (distal part near the pharynx).

The protein resides in the secreted. Delta-conotoxins bind to site 6 of voltage-gated sodium channels (Nav) and inhibit the inactivation process. Binding of this toxin is strongly calcium-dependent but not voltage-dependent. The binding site is most likely on the extracellular side of the sodium channel. Binds receptor sites on both mollusk and rat central nervous system, but despite its high affinity binding to rat sodium channel, it has no functional effect in vivo and in vitro on it. Also has no effect on Gambusia fish. Is important in mollusk for the paralysis of the prey. Upon injection of the peptide, a subordinate lobster assumes an exaggerated dominant posture (of a 'King-Kong' lobster!). This Conus textile (Cloth-of-gold cone) protein is Delta-conotoxin TxVIA.